The chain runs to 248 residues: MAGESPSIQALRDLREASCGPVAGAADGAPTVTQDLSENVILTSLDDLHNWARLSSLWPLLYGTACCFIEFAALLGSRFDFDRFGLVPRSSPRQADLLIVAGTVTMKMAPALVRLYEQMPEPKYVIAMGACTITGGMFSADSTTAVRGVDKLIPVDLYMPGCPPRPEAIFDAVIKLRKKVANESVADRRQLQQTHRYCTVAHAMTAVEPIVTGAYLRAETQVAALQPGAGLPMPALETADAVQPSEPS.

Residues Cys-66, Cys-67, Cys-131, and Cys-162 each contribute to the [4Fe-4S] cluster site.

The protein belongs to the complex I 20 kDa subunit family. NDH-1 can be composed of about 15 different subunits; different subcomplexes with different compositions have been identified which probably have different functions. Requires [4Fe-4S] cluster as cofactor.

The protein resides in the cellular thylakoid membrane. The enzyme catalyses a plastoquinone + NADH + (n+1) H(+)(in) = a plastoquinol + NAD(+) + n H(+)(out). It carries out the reaction a plastoquinone + NADPH + (n+1) H(+)(in) = a plastoquinol + NADP(+) + n H(+)(out). In terms of biological role, NDH-1 shuttles electrons from an unknown electron donor, via FMN and iron-sulfur (Fe-S) centers, to quinones in the respiratory and/or the photosynthetic chain. The immediate electron acceptor for the enzyme in this species is believed to be plastoquinone. Couples the redox reaction to proton translocation, and thus conserves the redox energy in a proton gradient. Cyanobacterial NDH-1 also plays a role in inorganic carbon-concentration. This chain is NAD(P)H-quinone oxidoreductase subunit K, found in Synechococcus sp. (strain WH7803).